Consider the following 555-residue polypeptide: Potassium-transporting ATPase potassium-binding subunit (555 aa).

The next 10 helical transmembrane spans lie at 2–22 (IWVAVVITMLLFILVAKPTGI), 60–80 (QYALSLVLLNGFMIVVVYFIF), 130–150 (IGITFLMFAAPATTLALVMAF), 173–193 (VFLPIAFVTALVFVALGVPQT), 246–266 (MSNILQMMLMMLLPTALPFTY), 278–298 (ILFVSLFMVFLLGFITITTSE), 374–394 (AGFVNIIMYAIIAVFISGLMV), 412–432 (LIAVTILFHPLLILGFSALAL), 483–503 (LVMFLGRYFSLVTMLAVAASL), and 525–545 (GIFIGTIVIVGALTFFPMLVL).

Belongs to the KdpA family. As to quaternary structure, the system is composed of three essential subunits: KdpA, KdpB and KdpC.

Its subcellular location is the cell membrane. In terms of biological role, part of the high-affinity ATP-driven potassium transport (or Kdp) system, which catalyzes the hydrolysis of ATP coupled with the electrogenic transport of potassium into the cytoplasm. This subunit binds the extracellular potassium ions and delivers the ions to the membrane domain of KdpB through an intramembrane tunnel. This Bacillus cereus (strain AH820) protein is Potassium-transporting ATPase potassium-binding subunit.